The sequence spans 257 residues: Uridylate kinase (257 aa).

Residue 8 to 11 participates in ATP binding; sequence KLSG. Residues 21-26 are involved in allosteric activation by GTP; that stretch reads GSAGFG. Gly-56 is a UMP binding site. Gly-57 and Arg-61 together coordinate ATP. UMP is bound by residues Asp-75 and 136 to 143; that span reads NGAPFFTT. 3 residues coordinate ATP: Asn-164, Tyr-170, and Asp-173.

This sequence belongs to the UMP kinase family. In terms of assembly, homohexamer.

Its subcellular location is the cytoplasm. The catalysed reaction is UMP + ATP = UDP + ADP. The protein operates within pyrimidine metabolism; CTP biosynthesis via de novo pathway; UDP from UMP (UMPK route): step 1/1. With respect to regulation, allosterically activated by GTP. Inhibited by UTP. Functionally, catalyzes the reversible phosphorylation of UMP to UDP. In Deinococcus geothermalis (strain DSM 11300 / CIP 105573 / AG-3a), this protein is Uridylate kinase.